The following is a 37-amino-acid chain: Large ribosomal subunit protein bL36 (37 aa).

This sequence belongs to the bacterial ribosomal protein bL36 family.

This is Large ribosomal subunit protein bL36 from Synechococcus sp. (strain RCC307).